A 620-amino-acid chain; its full sequence is Pentatricopeptide repeat-containing protein At5g66520 (620 aa).

PPR repeat units lie at residues 79–113 (DTFLWNLMIRGFSCSDEPERSLLLYQRMLCSSAPH), 114–148 (NAYTFPSLLKACSNLSAFEETTQIHAQITKLGYEN), 149–179 (DVYAVNSLINSYAVTGNFKLAHLLFDRIPEP), 180–210 (DDVSWNSVIKGYVKAGKMDIALTLFRKMAEK), 211–245 (NAISWTTMISGYVQADMNKEALQLFHEMQNSDVEP), 246–280 (DNVSLANALSACAQLGALEQGKWIHSYLNKTRIRM), 281–311 (DSVLGCVLIDMYAKCGEMEEALEVFKNIKKK), 312–346 (SVQAWTALISGYAYHGHGREAISKFMEMQKMGIKP), 347–382 (NVITFTAVLTACSYTGLVEEGKLIFYSMERDYNLKP), and 383–413 (TIEHYGCIVDLLGRAGLLDEAKRFIQEMPLK). Positions 418–493 (IWGALLKACR…VPGCSTISLE (76 aa)) are type E motif. The interval 494 to 524 (GTTHEFLAGDRSHPEIEKIQSKWRIMRRKLE) is type E(+) motif. Positions 525 to 620 (ENGYVPELEE…DGKCSCGDYW (96 aa)) are type DYW motif.

This sequence belongs to the PPR family. PCMP-H subfamily.

The sequence is that of Pentatricopeptide repeat-containing protein At5g66520 (PCMP-H61) from Arabidopsis thaliana (Mouse-ear cress).